Here is a 346-residue protein sequence, read N- to C-terminus: Holliday junction branch migration complex subunit RuvB (346 aa).

Residues 4-185 (SDRIITASPF…FGIVSRLEFY (182 aa)) are large ATPase domain (RuvB-L). ATP-binding positions include Leu24, Arg25, Gly66, Lys69, Thr70, Thr71, 132-134 (EDY), Arg175, Tyr185, and Arg222. Thr70 is a Mg(2+) binding site. Residues 186-256 (TSDELSKIVT…VADAALQMLD (71 aa)) form a small ATPAse domain (RuvB-S) region. The head domain (RuvB-H) stretch occupies residues 259–346 (AAGLDVLDRK…AATPGLFNPD (88 aa)). Residues Arg295, Arg314, and Arg319 each contribute to the DNA site.

The protein belongs to the RuvB family. In terms of assembly, homohexamer. Forms an RuvA(8)-RuvB(12)-Holliday junction (HJ) complex. HJ DNA is sandwiched between 2 RuvA tetramers; dsDNA enters through RuvA and exits via RuvB. An RuvB hexamer assembles on each DNA strand where it exits the tetramer. Each RuvB hexamer is contacted by two RuvA subunits (via domain III) on 2 adjacent RuvB subunits; this complex drives branch migration. In the full resolvosome a probable DNA-RuvA(4)-RuvB(12)-RuvC(2) complex forms which resolves the HJ.

It is found in the cytoplasm. It catalyses the reaction ATP + H2O = ADP + phosphate + H(+). In terms of biological role, the RuvA-RuvB-RuvC complex processes Holliday junction (HJ) DNA during genetic recombination and DNA repair, while the RuvA-RuvB complex plays an important role in the rescue of blocked DNA replication forks via replication fork reversal (RFR). RuvA specifically binds to HJ cruciform DNA, conferring on it an open structure. The RuvB hexamer acts as an ATP-dependent pump, pulling dsDNA into and through the RuvAB complex. RuvB forms 2 homohexamers on either side of HJ DNA bound by 1 or 2 RuvA tetramers; 4 subunits per hexamer contact DNA at a time. Coordinated motions by a converter formed by DNA-disengaged RuvB subunits stimulates ATP hydrolysis and nucleotide exchange. Immobilization of the converter enables RuvB to convert the ATP-contained energy into a lever motion, pulling 2 nucleotides of DNA out of the RuvA tetramer per ATP hydrolyzed, thus driving DNA branch migration. The RuvB motors rotate together with the DNA substrate, which together with the progressing nucleotide cycle form the mechanistic basis for DNA recombination by continuous HJ branch migration. Branch migration allows RuvC to scan DNA until it finds its consensus sequence, where it cleaves and resolves cruciform DNA. In Nitrosomonas eutropha (strain DSM 101675 / C91 / Nm57), this protein is Holliday junction branch migration complex subunit RuvB.